A 502-amino-acid polypeptide reads, in one-letter code: ATP synthase subunit alpha (502 aa).

169 to 176 (GDRQTGKT) contacts ATP.

This sequence belongs to the ATPase alpha/beta chains family. In terms of assembly, F-type ATPases have 2 components, CF(1) - the catalytic core - and CF(0) - the membrane proton channel. CF(1) has five subunits: alpha(3), beta(3), gamma(1), delta(1), epsilon(1). CF(0) has three main subunits: a(1), b(2) and c(9-12). The alpha and beta chains form an alternating ring which encloses part of the gamma chain. CF(1) is attached to CF(0) by a central stalk formed by the gamma and epsilon chains, while a peripheral stalk is formed by the delta and b chains.

It is found in the cell membrane. It carries out the reaction ATP + H2O + 4 H(+)(in) = ADP + phosphate + 5 H(+)(out). Functionally, produces ATP from ADP in the presence of a proton gradient across the membrane. The alpha chain is a regulatory subunit. The chain is ATP synthase subunit alpha from Staphylococcus aureus (strain bovine RF122 / ET3-1).